We begin with the raw amino-acid sequence, 704 residues long: Acetyl-coenzyme A synthetase 1 (704 aa).

CoA contacts are provided by residues 239–242 (RGGK) and T358. Residues 434–436 (GEP), 458–463 (DTYWQT), D550, and R565 each bind ATP. CoA is bound at residue S573. R576 contributes to the ATP binding site. A CoA-binding site is contributed by R641. A Microbody targeting signal motif is present at residues 702–704 (VKL).

This sequence belongs to the ATP-dependent AMP-binding enzyme family.

It localises to the microsome. Its subcellular location is the endoplasmic reticulum. The enzyme catalyses acetate + ATP + CoA = acetyl-CoA + AMP + diphosphate. The polypeptide is Acetyl-coenzyme A synthetase 1 (ACS1) (Candida glabrata (strain ATCC 2001 / BCRC 20586 / JCM 3761 / NBRC 0622 / NRRL Y-65 / CBS 138) (Yeast)).